The primary structure comprises 982 residues: Hunchback-like protein (982 aa).

Positions 87–194 (QPGEKIHPDG…SNYQVTSEPV (108 aa)) are disordered. The segment covering 101-110 (PKEDGRKSSE) has biased composition (basic and acidic residues). A compositionally biased stretch (polar residues) spans 111–132 (HTNSYDVSASQSPSNDGAQSDS). Residues 142–152 (CMTETEMDTDE) are compositionally biased toward acidic residues. The span at 153–175 (KDSTIKPEDQATPKLEEGSDSKP) shows a compositional bias: basic and acidic residues. The segment covering 176–193 (ESTSVEGTSSNYQVTSEP) has biased composition (polar residues). 7 consecutive C2H2-type zinc fingers follow at residues 336–358 (LVCP…MNTH), 361–384 (HQCS…RESH), 538–560 (FKCK…ARTH), 567–589 (LNCQ…YRNH), 595–617 (FQCK…MKSH), 623–647 (FRCM…KYNH), and 734–756 (LKCS…SMSH). Positions 377 to 415 (KKHMRESHTVEEQLRAGFESEPAKESASSPKNLSLSKDG) are disordered. Residues 811 to 896 (EEMDQGSDSA…PPLHSSSIVA (86 aa)) form a disordered region. Composition is skewed to polar residues over residues 816-831 (GSDS…QISS) and 843-862 (SLEQ…SNDS). Positions 863 to 875 (AMEKDGESADDAP) are enriched in basic and acidic residues. C2H2-type zinc fingers lie at residues 929-951 (FYCD…MRFH) and 957-981 (FMCS…QARH).

The protein belongs to the hunchback C2H2-type zinc-finger protein family. As to expression, expressed primarily in ectodermal cells during embryonic and larval development.

The protein localises to the nucleus. Functionally, required for the late stages of development. Plays a role in the developmental timing of postembryonic hypodermal seam cell fusion events and adult alae production. The protein is Hunchback-like protein of Caenorhabditis elegans.